The sequence spans 324 residues: Mevalonate-3-kinase (324 aa).

L19 is a binding site for substrate. 109 to 112 (SGSS) serves as a coordination point for ATP. Substrate-binding residues include E145 and R149. Positions 190 and 193 each coordinate ATP.

This sequence belongs to the GHMP kinase family. Homodimer.

The enzyme catalyses (R)-mevalonate + ATP = (R)-3-phosphomevalonate + ADP + H(+). The protein operates within isoprenoid biosynthesis; isopentenyl diphosphate biosynthesis via mevalonate pathway. Functionally, catalyzes the phosphorylation of mevalonate (MVA) to yield mevalonate-3-phosphate. Functions in an alternative mevalonate pathway, which passes through mevalonate 3-phosphate rather than mevalonate 5-phosphate. Also able to catalyze the formation of isobutene via the conversion of 3-hydroxyisovalerate (3-HIV) to an unstable 3-phosphate intermediate that undergoes a spontaneous decarboxylation. This is Mevalonate-3-kinase from Picrophilus torridus (strain ATCC 700027 / DSM 9790 / JCM 10055 / NBRC 100828 / KAW 2/3).